Here is an 85-residue protein sequence, read N- to C-terminus: Toxin CsE8 (85 aa).

Residues 1-19 (MNSLLMITACLVLFGTVWS) form the signal peptide. Residues 20–83 (EKGYLVHEDT…TWPLIGKLCG (64 aa)) enclose the LCN-type CS-alpha/beta domain. 4 disulfide bridges follow: Cys-31–Cys-82, Cys-35–Cys-58, Cys-44–Cys-63, and Cys-48–Cys-65. Cys-82 is modified (cysteine amide).

The protein belongs to the long (4 C-C) scorpion toxin superfamily. Sodium channel inhibitor family. Beta subfamily. As to expression, expressed by the venom gland.

It is found in the secreted. In terms of biological role, beta toxins bind voltage-independently at site-4 of sodium channels (Nav) and shift the voltage of activation toward more negative potentials thereby affecting sodium channel activation and promoting spontaneous and repetitive firing. The sequence is that of Toxin CsE8 from Centruroides sculpturatus (Arizona bark scorpion).